The following is a 219-amino-acid chain: Claudin-6 (219 aa).

Over 1–7 the chain is Cytoplasmic; sequence MASTGLQ. A helical membrane pass occupies residues 8–28; the sequence is ILGIVLTLLGWVNALVSCALP. Residues 29–81 lie on the Extracellular side of the membrane; it reads MWKVTAFIGNSIVVAQMVWEGLWMSCVVQSTGQMQCKVYDSLLALPQDLQAAR. The chain crosses the membrane as a helical span at residues 82-102; that stretch reads ALCVVTLLIVLLGLLVYLAGA. The Cytoplasmic segment spans residues 103–116; it reads KCTTCVEDRNSKSR. A helical transmembrane segment spans residues 117 to 137; sequence LVLISGIIFVISGVLTLIPVC. At 138–163 the chain is on the extracellular side; sequence WTAHSIIQDFYNPLVADAQKRELGAS. Residues 164-184 traverse the membrane as a helical segment; that stretch reads LYLGWAASGLLLLGGGLLCCA. The Cytoplasmic portion of the chain corresponds to 185–219; that stretch reads CSSGGTQGPRHYMACYSTSVPHSRGPSEYPTKNYV. Residues serine 201, serine 203, serine 207, and serine 211 each carry the phosphoserine modification. The interval 218–219 is interactions with TJP1, TJP2 and TJP3; sequence YV.

Belongs to the claudin family. Directly interacts with TJP1/ZO-1, TJP2/ZO-2 and TJP3/ZO-3. Interacts with CLDN1, CD81 and OCLN. In terms of tissue distribution, expressed mostly in embryonic tissues.

The protein localises to the cell junction. It localises to the tight junction. It is found in the cell membrane. In terms of biological role, plays a major role in tight junction-specific obliteration of the intercellular space, through calcium-independent cell-adhesion activity. The chain is Claudin-6 (Cldn6) from Mus musculus (Mouse).